Here is a 139-residue protein sequence, read N- to C-terminus: Ribonuclease VapC3 (139 aa).

Residues 14–121 (EAIVLDTGAF…VATDDYTLQR (108 aa)) form the PINc domain. Asp19 lines the Mg(2+) pocket.

It belongs to the PINc/VapC protein family. Requires Mg(2+) as cofactor.

Its function is as follows. Toxic component of a type II toxin-antitoxin (TA) system. An RNase. This Aeropyrum pernix (strain ATCC 700893 / DSM 11879 / JCM 9820 / NBRC 100138 / K1) protein is Ribonuclease VapC3.